The primary structure comprises 219 residues: Small ribosomal subunit protein uS3c (219 aa).

One can recognise a KH type-2 domain in the interval Val47–Glu119.

This sequence belongs to the universal ribosomal protein uS3 family. In terms of assembly, part of the 30S ribosomal subunit.

The protein resides in the plastid. The protein localises to the chloroplast. The sequence is that of Small ribosomal subunit protein uS3c (rps3) from Staurastrum punctulatum (Green alga).